The primary structure comprises 491 residues: Probable ribonuclease FAU-1 (491 aa).

It belongs to the FAU-1 family.

Functionally, probable RNase involved in rRNA stability through maturation and/or degradation of precursor rRNAs. Binds to RNA in loop regions with AU-rich sequences. In Thermofilum pendens (strain DSM 2475 / Hrk 5), this protein is Probable ribonuclease FAU-1.